Reading from the N-terminus, the 298-residue chain is Mimecan (298 aa).

An N-terminal signal peptide occupies residues 1-20; that stretch reads MKTLQSTLLLLLFVPLIKPA. N-linked (GlcNAc...) (keratan sulfate) asparagine glycosylation occurs at Asn88. 7 LRR repeats span residues 112–131, 132–155, 156–179, 180–199, 200–225, 226–246, and 247–277; these read DAVP…FNKI, KKLT…GNLI, EDIE…ENQL, LKLP…YNKI, KSRG…HNAL, ESVP…FNNI, and ASIT…GNPI. Residue Asn214 is glycosylated (N-linked (GlcNAc...) (keratan sulfate) asparagine). Residues Cys255 and Cys288 are joined by a disulfide bond. N-linked (GlcNAc...) (keratan sulfate) asparagine glycosylation is present at Asn258.

Belongs to the small leucine-rich proteoglycan (SLRP) family. SLRP class III subfamily. In terms of processing, contains keratan sulfate.

Its subcellular location is the secreted. It localises to the extracellular space. It is found in the extracellular matrix. Functionally, induces bone formation in conjunction with TGF-beta-1 or TGF-beta-2. This is Mimecan (OGN) from Pongo abelii (Sumatran orangutan).